Consider the following 255-residue polypeptide: NAD kinase (255 aa).

The active-site Proton acceptor is the D44. NAD(+) is bound by residues 44 to 45, H49, 114 to 115, D144, A152, 155 to 160, and Q216; these read DG, NE, and SAYNLS.

It belongs to the NAD kinase family. Requires a divalent metal cation as cofactor.

It is found in the cytoplasm. It carries out the reaction NAD(+) + ATP = ADP + NADP(+) + H(+). Its function is as follows. Involved in the regulation of the intracellular balance of NAD and NADP, and is a key enzyme in the biosynthesis of NADP. Catalyzes specifically the phosphorylation on 2'-hydroxyl of the adenosine moiety of NAD to yield NADP. This chain is NAD kinase, found in Rickettsia africae (strain ESF-5).